The sequence spans 64 residues: Translation machinery-associated protein 7 (64 aa).

Disordered regions lie at residues 1–38 (MSSRQGGKMKPLKQKKKQQQDLDPEDIAFKEKQKADAA) and 45–64 (ANMKSGKPLVGGGIKKSGKK). Residues 27–38 (IAFKEKQKADAA) are compositionally biased toward basic and acidic residues. Gly residues predominate over residues 53–64 (LVGGGIKKSGKK).

Belongs to the TMA7 family. In terms of assembly, interacts with the 40S ribosomal subunit.

It localises to the cytoplasm. It is found in the nucleus. In terms of biological role, involved in protein synthesis. The polypeptide is Translation machinery-associated protein 7 (TMA7) (Saccharomyces cerevisiae (strain ATCC 204508 / S288c) (Baker's yeast)).